The primary structure comprises 479 residues: POU domain, class 2, transcription factor 2 (479 aa).

Disordered stretches follow at residues 1 to 86 (MVHS…AQPH), 166 to 200 (TQAV…PSDL), 275 to 298 (SSLP…GRRR), 357 to 393 (PCSA…SQAS), and 409 to 479 (TLHP…PYQP). The span at 12-37 (RMSKPLEAEKQGLDSPSEHTDTERNG) shows a compositional bias: basic and acidic residues. A compositionally biased stretch (polar residues) spans 38–60 (PDTNHQNPQNKTSPFSVSPTGPS). Pro residues predominate over residues 76–85 (APLPPQPAQP). The POU-specific domain occupies 195–269 (EEPSDLEELE…LLEKWLNDAE (75 aa)). A compositionally biased stretch (low complexity) spans 275-288 (SSLPSPNQLSSPSL). A DNA-binding region (homeobox) is located at residues 297–356 (RRKKRTSIETNVRFALEKSFLANQKPTSEEILLIAEQLHMEKEVIRVWFCNRRQKEKRIN). Residues 389-410 (LSQASSSLSTTVTTLSSAVGTL) are leucine-zipper. Residues 416–425 (AGGGGGGGGA) are compositionally biased toward gly residues.

Belongs to the POU transcription factor family. Class-2 subfamily. As to quaternary structure, interacts with NR3C1, AR and PGR. Interacts with POU2AF1; the interaction increases POU2F2 transactivation activity. Isoform 3 is B-cell specific. Isoform 5 is expressed in B-cells and the immunoglobulin-expressing T-cell line MOLT-4, but not in the T-cell line BW5147.

Its subcellular location is the cytoplasm. It is found in the nucleus. With respect to regulation, transactivation activity is enhanced by transcriptional coactivator POU2AF1. Functionally, transcription factor that specifically binds to the octamer motif (5'-ATTTGCAT-3'). Regulates IL6 expression in B cells with POU2AF1. Regulates transcription in a number of tissues in addition to activating immunoglobulin gene expression. Modulates transcription transactivation by NR3C1, AR and PGR. In terms of biological role, activates the U2 small nuclear RNA (snRNA) promoter. This is POU domain, class 2, transcription factor 2 from Homo sapiens (Human).